The chain runs to 210 residues: Protein RCR2 (210 aa).

Residues tryptophan 41–valine 61 traverse the membrane as a helical segment. The tract at residues proline 125 to leucine 149 is disordered. Serine 161 is modified (phosphoserine). The segment covering asparagine 175–valine 199 has biased composition (polar residues). The disordered stretch occupies residues asparagine 175–lysine 210. The residue at position 191 (threonine 191) is a Phosphothreonine.

It to yeast YBR005W.

Its subcellular location is the membrane. The polypeptide is Protein RCR2 (RCR2) (Saccharomyces cerevisiae (strain ATCC 204508 / S288c) (Baker's yeast)).